A 317-amino-acid polypeptide reads, in one-letter code: tRNA pseudouridine synthase B (317 aa).

Residue D47 is the Nucleophile of the active site.

This sequence belongs to the pseudouridine synthase TruB family. Type 1 subfamily.

It carries out the reaction uridine(55) in tRNA = pseudouridine(55) in tRNA. Responsible for synthesis of pseudouridine from uracil-55 in the psi GC loop of transfer RNAs. This is tRNA pseudouridine synthase B from Shewanella sp. (strain MR-7).